A 523-amino-acid polypeptide reads, in one-letter code: Sensory neuron membrane protein 1 (523 aa).

The Cytoplasmic portion of the chain corresponds to M1 to A11. The chain crosses the membrane as a helical span at residues I12–L32. Residues K33–V458 lie on the Extracellular side of the membrane. N-linked (GlcNAc...) asparagine glycans are attached at residues N67 and N229. Cystine bridges form between C268/C333, C297/C352, and C335/C341. N440 carries N-linked (GlcNAc...) asparagine glycosylation. The chain crosses the membrane as a helical span at residues G459–F479. The Cytoplasmic segment spans residues H480 to I523.

The protein belongs to the CD36 family. As to expression, detected in sensory neurons in the antenna.

The protein resides in the cell membrane. Its function is as follows. Plays an olfactory role that is not restricted to pheromone sensitivity. The polypeptide is Sensory neuron membrane protein 1 (Heliothis virescens (Tobacco budworm moth)).